The sequence spans 311 residues: Coproporphyrin III ferrochelatase 1 (311 aa).

Fe-coproporphyrin III is bound by residues Tyr-12, Arg-29, 45–46 (RY), Ser-53, and Tyr-124. Positions 182 and 263 each coordinate Fe(2+).

The protein belongs to the ferrochelatase family.

It localises to the cytoplasm. It carries out the reaction Fe-coproporphyrin III + 2 H(+) = coproporphyrin III + Fe(2+). The protein operates within porphyrin-containing compound metabolism; protoheme biosynthesis. Involved in coproporphyrin-dependent heme b biosynthesis. Catalyzes the insertion of ferrous iron into coproporphyrin III to form Fe-coproporphyrin III. In Bacillus cereus (strain ZK / E33L), this protein is Coproporphyrin III ferrochelatase 1.